The sequence spans 1376 residues: YLP motif-containing protein 1 (1376 aa).

Disordered stretches follow at residues 1–335 (MYPN…PEED) and 511–1058 (STIP…PPGR). The span at 14–27 (YPPPPVPPPPPPVA) shows a compositional bias: pro residues. 2 stretches are compositionally biased toward low complexity: residues 31-50 (ASPGPGYSSSTAPAAPSSSG) and 59-80 (LAQLQQLQQMHQKQMQCVLQPH). 5 stretches are compositionally biased toward pro residues: residues 81 to 93 (HLPPPPLPPPPVM), 102 to 114 (QPPPPPMPPPPGP), 148 to 158 (PESPPVPPGSY), 166 to 176 (MPPPQPPPSYY), and 184 to 204 (YLPPAQPSPSKPQLPPPPPSI). 2 stretches are compositionally biased toward polar residues: residues 207 to 216 (GNKTTIQQEP) and 238 to 260 (STMTPQEQQQYWYRQHLLSLQQR). The segment covering 261 to 271 (TKVHLPGHKKG) has biased composition (basic residues). Residues 277–286 (DVPEPIKEEA) show a composition bias toward basic and acidic residues. Pro residues-rich tracts occupy residues 303–320 (PPLPPPNEEMPPPLPPEE), 511–537 (STIPPPGMPPPVMPPSLPTSVPPPGMP), 545–594 (LPPP…PQGM), and 632–641 (PPSPYHPPPQ). A compositionally biased stretch (polar residues) spans 642–671 (SEQGNSKPLNKVFSSEQGLGESSSALSQSV). The residue at position 675 (K675) is an N6-methyllysine. The segment covering 698 to 714 (RGPREQKEQLQKLKDFG) has biased composition (basic and acidic residues). Composition is skewed to pro residues over residues 738–753 (MYPPPGSYRPPPPMGK), 773–796 (TRPPVPIPPPPPPPPPPPPPPPVI), and 840–870 (PVLPPPPVHPSIPPPGPMPMGMPPMSKPPPV). A Glycyl lysine isopeptide (Lys-Gly) (interchain with G-Cter in SUMO2) cross-link involves residue K886. Composition is skewed to basic and acidic residues over residues 896–930 (ITLRPDPLPERSAFDADHAGQRDRYDRDRDREPYF), 937–1004 (TDHR…DRPP), 1013–1023 (GERRTYPEERM), and 1039–1058 (RVEKKPESKNVDDILKPPGR). A Glycyl lysine isopeptide (Lys-Gly) (interchain with G-Cter in SUMO2) cross-link involves residue K943. Residues 1326–1333 (KKRVRWAD) form an involved in interaction with PPP1CA region.

As to quaternary structure, interacts with PPP1CA and NCOA5. Forms a complex with ILF2, ILF3, KHDRBS1, RBMX, NCOA5 and PPP1CA. As to expression, high level expression seen in the brain, adipose tissue, heart and kidney, with a low level expression in muscle, spleen and lung (at protein level).

It is found in the nucleus. The protein localises to the nucleus speckle. Plays a role in the reduction of telomerase activity during differentiation of embryonic stem cells by binding to the core promoter of TERT and controlling its down-regulation. This chain is YLP motif-containing protein 1 (Ylpm1), found in Rattus norvegicus (Rat).